Here is a 207-residue protein sequence, read N- to C-terminus: MSCFVVGLTGGIGSGKSTVADLFVEQGAGLVDTDAIAHELTAAGGAAMPALIAEFGALVATADGAMDRAVMRRQVFADPSARVRLEGILHPLIRQLSAERCRAAASPYVILAVPLLVESGTYRERCDRIVVVDCPESLQIERVMARNGMSADEVKAIMAAQATRQQRLAAANDVVVNDADQAKLYAQVSALHLQYLKLSAEKVKASC.

A DPCK domain is found at 5–202 (VVGLTGGIGS…LQYLKLSAEK (198 aa)). 13 to 18 (GSGKST) lines the ATP pocket.

It belongs to the CoaE family.

Its subcellular location is the cytoplasm. It catalyses the reaction 3'-dephospho-CoA + ATP = ADP + CoA + H(+). It functions in the pathway cofactor biosynthesis; coenzyme A biosynthesis; CoA from (R)-pantothenate: step 5/5. Its function is as follows. Catalyzes the phosphorylation of the 3'-hydroxyl group of dephosphocoenzyme A to form coenzyme A. The polypeptide is Dephospho-CoA kinase (Dechloromonas aromatica (strain RCB)).